Here is a 275-residue protein sequence, read N- to C-terminus: Mitochondrial outer membrane protein porin (275 aa).

Position 1 is a blocked amino end (Met) (Met1).

This sequence belongs to the eukaryotic mitochondrial porin family. Highly divergent.

The protein resides in the mitochondrion outer membrane. Functionally, forms a channel of about 1,7 nM through the cell membrane that allows diffusion of small hydrophilic molecules. The channel adopts an open conformation at low or zero membrane potential and a closed conformation at potentials above 20 mv. The open state has a weak anion selectivity whereas the closed state is cation-selective. The chain is Mitochondrial outer membrane protein porin (porA) from Dictyostelium discoideum (Social amoeba).